Consider the following 160-residue polypeptide: Ribosomal RNA large subunit methyltransferase H (160 aa).

Residues L76 and G108 each coordinate S-adenosyl-L-methionine.

Belongs to the RNA methyltransferase RlmH family. Homodimer.

Its subcellular location is the cytoplasm. The enzyme catalyses pseudouridine(1915) in 23S rRNA + S-adenosyl-L-methionine = N(3)-methylpseudouridine(1915) in 23S rRNA + S-adenosyl-L-homocysteine + H(+). Functionally, specifically methylates the pseudouridine at position 1915 (m3Psi1915) in 23S rRNA. This chain is Ribosomal RNA large subunit methyltransferase H, found in Xanthobacter autotrophicus (strain ATCC BAA-1158 / Py2).